A 222-amino-acid polypeptide reads, in one-letter code: Charged multivesicular body protein 3 (222 aa).

A lipid anchor (N-myristoyl glycine) is attached at G2. The segment at 2 to 113 is intramolecular interaction with C-terminus; that stretch reads GLFGKTQEKP…LQKSTEVMKA (112 aa). Residues 22–54 adopt a coiled-coil conformation; the sequence is KIRKEMRVVDRQIRDIQREEEKVKRSVKDAAKK. 2 important for autoinhibitory function regions span residues 59-64 and 168-169; these read VCIVLA and IL. Positions 141–222 form a coiled coil; that stretch reads EEMLEDTFES…MQSRLATLRS (82 aa). An intramolecular interaction with N-terminus region spans residues 151–220; that stretch reads MDDQEEMEEE…EAMQSRLATL (70 aa). An interaction with VPS4A region spans residues 151–222; sequence MDDQEEMEEE…MQSRLATLRS (72 aa). K179 is covalently cross-linked (Glycyl lysine isopeptide (Lys-Gly) (interchain with G-Cter in ubiquitin)). The disordered stretch occupies residues 180 to 222; the sequence is APSKVTDALPEPEPPGAMAASEDEEEEEEALEAMQSRLATLRS. S200 carries the post-translational modification Phosphoserine. Acidic residues predominate over residues 200–210; sequence SEDEEEEEEAL. An MIT-interacting motif motif is present at residues 201–211; sequence EDEEEEEEALE. Interaction with STAMBP regions lie at residues 203–207 and 221–222; these read EEEEE and RS.

Belongs to the SNF7 family. Probable core component of the endosomal sorting required for transport complex III (ESCRT-III). ESCRT-III components are thought to multimerize to form a flat lattice on the perimeter membrane of the endosome. Several assembly forms of ESCRT-III may exist that interact and act sequentially. Forms a metastable monomer in solution; its core structure (without part of the putative autoinhibitory C-terminal acidic region) oligomerizes into a flat lattice via two different dimerization interfaces. In vitro, heteromerizes with CHMP2A (but not CHMP4) to form helical tubular structures that expose membrane-interacting sites on the outside whereas VPS4B can associate on the inside of the tubule. May interact with IGFBP7; the relevance of such interaction however remains unclear. Interacts with CHMP2A. Interacts with CHMP4A; the interaction requires the release of CHMP4A autoinhibition. Interacts with VPS4A. Interacts with STAMBP; the interaction appears to relieve the autoinhibition of CHMP3. Interacts with VTA1. In terms of tissue distribution, widely expressed. Expressed in heart, brain, placenta, lung, liver, skeletal muscle, kidney and pancreas.

It is found in the cytoplasm. Its subcellular location is the cytosol. It localises to the membrane. The protein localises to the endosome. The protein resides in the late endosome membrane. Functionally, probable core component of the endosomal sorting required for transport complex III (ESCRT-III) which is involved in multivesicular bodies (MVBs) formation and sorting of endosomal cargo proteins into MVBs. MVBs contain intraluminal vesicles (ILVs) that are generated by invagination and scission from the limiting membrane of the endosome and mostly are delivered to lysosomes enabling degradation of membrane proteins, such as stimulated growth factor receptors, lysosomal enzymes and lipids. The MVB pathway appears to require the sequential function of ESCRT-O, -I,-II and -III complexes. ESCRT-III proteins mostly dissociate from the invaginating membrane before the ILV is released. The ESCRT machinery also functions in topologically equivalent membrane fission events, such as the terminal stages of cytokinesis and the budding of enveloped viruses (HIV-1 and other lentiviruses). ESCRT-III proteins are believed to mediate the necessary vesicle extrusion and/or membrane fission activities, possibly in conjunction with the AAA ATPase VPS4. Selectively binds to phosphatidylinositol 3,5-bisphosphate PtdIns(3,5)P2 and PtdIns(3,4)P2 in preference to other phosphoinositides tested. Involved in late stages of cytokinesis. Plays a role in endosomal sorting/trafficking of EGF receptor. Isoform 2 prevents stress-mediated cell death and accumulation of reactive oxygen species when expressed in yeast cells. In Homo sapiens (Human), this protein is Charged multivesicular body protein 3 (CHMP3).